The following is a 141-amino-acid chain: MAKKVMKLVKLQIPAGKANPAPPVGPALGQAGVNIMGFCKEFNARTQDQAGLIIPVVITVFEDRSFTFITKTPPAAVLLKKAAGIESGSGEPNRKKVATVKRDKVREIAETKMPDLNAASVETAMLMVEGTARSMGIVIED.

Belongs to the universal ribosomal protein uL11 family. Part of the ribosomal stalk of the 50S ribosomal subunit. Interacts with L10 and the large rRNA to form the base of the stalk. L10 forms an elongated spine to which L12 dimers bind in a sequential fashion forming a multimeric L10(L12)X complex. Post-translationally, one or more lysine residues are methylated.

Its function is as follows. Forms part of the ribosomal stalk which helps the ribosome interact with GTP-bound translation factors. This chain is Large ribosomal subunit protein uL11, found in Exiguobacterium sibiricum (strain DSM 17290 / CCUG 55495 / CIP 109462 / JCM 13490 / 255-15).